A 278-amino-acid polypeptide reads, in one-letter code: Probable septum site-determining protein MinC (278 aa).

Belongs to the MinC family. Interacts with MinD and FtsZ.

In terms of biological role, cell division inhibitor that blocks the formation of polar Z ring septums. Rapidly oscillates between the poles of the cell to destabilize FtsZ filaments that have formed before they mature into polar Z rings. Prevents FtsZ polymerization. This Gloeobacter violaceus (strain ATCC 29082 / PCC 7421) protein is Probable septum site-determining protein MinC.